The primary structure comprises 239 residues: Probable 2-phosphosulfolactate phosphatase (239 aa).

It belongs to the ComB family. The cofactor is Mg(2+).

The enzyme catalyses (2R)-O-phospho-3-sulfolactate + H2O = (2R)-3-sulfolactate + phosphate. In Clostridium botulinum (strain Langeland / NCTC 10281 / Type F), this protein is Probable 2-phosphosulfolactate phosphatase.